Reading from the N-terminus, the 330-residue chain is Probable integrase/recombinase protein MJ0367 (330 aa).

The region spanning 22-112 (IEETDKIKEY…LLKVFYRVLR (91 aa)) is the Core-binding (CB) domain. In terms of domain architecture, Tyr recombinase spans 136-325 (QHYDAVDAEM…RAESLEFIKK (190 aa)). Residues R177, K202, H275, R278, and H301 contribute to the active site. Catalysis depends on Y310, which acts as the O-(3'-phospho-DNA)-tyrosine intermediate.

The protein belongs to the 'phage' integrase family.

The protein is Probable integrase/recombinase protein MJ0367 of Methanocaldococcus jannaschii (strain ATCC 43067 / DSM 2661 / JAL-1 / JCM 10045 / NBRC 100440) (Methanococcus jannaschii).